The primary structure comprises 265 residues: Chlorophyll a-b binding protein 1A, chloroplastic (265 aa).

Residues 1-34 constitute a chloroplast transit peptide; it reads MAAAAMALSSPSFAGQAVKLSPSASENSGNGRIT. The helical transmembrane segment at 151–171 threads the bilayer; that stretch reads LVHAQSILAIWACQVVLMGAV. Valine 152, serine 156, glutamine 164, glutamate 172, arginine 175, and leucine 181 together coordinate chlorophyll b. Lysine 212, glutamate 213, asparagine 216, arginine 218, glutamine 230, histidine 245, and alanine 254 together coordinate chlorophyll a. Residues 219 to 239 traverse the membrane as a helical segment; the sequence is LAMFSMFGFFVQAIVTGKGPL. Residue phenylalanine 261 participates in chlorophyll b binding.

The protein belongs to the light-harvesting chlorophyll a/b-binding (LHC) protein family. The LHC complex consists of chlorophyll a-b binding proteins. It depends on Binds at least 14 chlorophylls (8 Chl-a and 6 Chl-b) and carotenoids such as lutein and neoxanthin. as a cofactor. Post-translationally, photoregulated by reversible phosphorylation of its threonine residues.

It localises to the plastid. Its subcellular location is the chloroplast thylakoid membrane. In terms of biological role, the light-harvesting complex (LHC) functions as a light receptor, it captures and delivers excitation energy to photosystems with which it is closely associated. This chain is Chlorophyll a-b binding protein 1A, chloroplastic (CAB1A), found in Solanum lycopersicum (Tomato).